Here is a 1408-residue protein sequence, read N- to C-terminus: DNA-directed RNA polymerase subunit beta' (1408 aa).

Zn(2+) contacts are provided by cysteine 70, cysteine 72, cysteine 85, and cysteine 88. Aspartate 460, aspartate 462, and aspartate 464 together coordinate Mg(2+). 4 residues coordinate Zn(2+): cysteine 814, cysteine 888, cysteine 895, and cysteine 898.

The protein belongs to the RNA polymerase beta' chain family. The RNAP catalytic core consists of 2 alpha, 1 beta, 1 beta' and 1 omega subunit. When a sigma factor is associated with the core the holoenzyme is formed, which can initiate transcription. Mg(2+) serves as cofactor. Requires Zn(2+) as cofactor.

It carries out the reaction RNA(n) + a ribonucleoside 5'-triphosphate = RNA(n+1) + diphosphate. In terms of biological role, DNA-dependent RNA polymerase catalyzes the transcription of DNA into RNA using the four ribonucleoside triphosphates as substrates. The sequence is that of DNA-directed RNA polymerase subunit beta' from Serratia proteamaculans (strain 568).